A 344-amino-acid polypeptide reads, in one-letter code: Chalcone synthase A (344 aa).

Residue C167 is part of the active site.

It belongs to the thiolase-like superfamily. Chalcone/stilbene synthases family.

It catalyses the reaction (E)-4-coumaroyl-CoA + 3 malonyl-CoA + 3 H(+) = 2',4,4',6'-tetrahydroxychalcone + 3 CO2 + 4 CoA. Its pathway is secondary metabolite biosynthesis; flavonoid biosynthesis. Functionally, the primary product of this enzyme is 4,2',4',6'-tetrahydroxychalcone (also termed naringenin-chalcone or chalcone) which can under specific conditions spontaneously isomerize into naringenin. This Ipomoea nil (Japanese morning glory) protein is Chalcone synthase A (CHSA).